The primary structure comprises 454 residues: ESX-1 secretion-associated protein EspB (454 aa).

3 disordered regions span residues Arg17 to Thr40, Gly82 to Ser128, and Ala391 to Lys454. A compositionally biased stretch (gly residues) spans Ala391–Lys422.

This sequence belongs to the EspB family. Cleaved at close to the C-terminus during secretion.

The protein localises to the secreted. The chain is ESX-1 secretion-associated protein EspB from Mycobacterium marinum (strain ATCC BAA-535 / M).